A 178-amino-acid polypeptide reads, in one-letter code: MFASRPAVHPVEAPPPTDPVEQPTGVLMKDLPGMPGTAGGLGLRVAQFVFAGVALAVMASTSDFPSVTAFCYLVAATIMQCLWSFSLAIVDIYALLVKRCLRNRRAVCLFAIGDGITAALTFGAACSSAGITVLIDNDLNICAENHCGSFKTATALAFMSWFALTPSFLLNFWSMAAR.

A disordered region spans residues 1–24; sequence MFASRPAVHPVEAPPPTDPVEQPT. The Cytoplasmic segment spans residues 1–37; it reads MFASRPAVHPVEAPPPTDPVEQPTGVLMKDLPGMPGT. The helical transmembrane segment at 38–58 threads the bilayer; sequence AGGLGLRVAQFVFAGVALAVM. The Extracellular portion of the chain corresponds to 59-69; sequence ASTSDFPSVTA. A helical transmembrane segment spans residues 70–90; it reads FCYLVAATIMQCLWSFSLAIV. At 91–105 the chain is on the cytoplasmic side; the sequence is DIYALLVKRCLRNRR. Residues 106–126 traverse the membrane as a helical segment; sequence AVCLFAIGDGITAALTFGAAC. The Extracellular segment spans residues 127–152; the sequence is SSAGITVLIDNDLNICAENHCGSFKT. The helical transmembrane segment at 153–173 threads the bilayer; it reads ATALAFMSWFALTPSFLLNFW. Over 174–178 the chain is Cytoplasmic; it reads SMAAR.

It belongs to the Casparian strip membrane proteins (CASP) family. As to quaternary structure, homodimer and heterodimers.

It localises to the cell membrane. In Brachypodium distachyon (Purple false brome), this protein is CASP-like protein 5A1.